The sequence spans 117 residues: Photosystem II reaction center Psb28 protein (117 aa).

It belongs to the Psb28 family. In terms of assembly, part of the photosystem II complex.

The protein resides in the cellular thylakoid membrane. The sequence is that of Photosystem II reaction center Psb28 protein from Prochlorococcus marinus (strain MIT 9312).